Reading from the N-terminus, the 101-residue chain is Large ribosomal subunit protein bL21 (101 aa).

It belongs to the bacterial ribosomal protein bL21 family. In terms of assembly, part of the 50S ribosomal subunit. Contacts protein L20.

In terms of biological role, this protein binds to 23S rRNA in the presence of protein L20. This Corynebacterium glutamicum (strain R) protein is Large ribosomal subunit protein bL21.